Reading from the N-terminus, the 259-residue chain is Peptide methionine sulfoxide reductase (259 aa).

A disordered region spans residues 66-90; that stretch reads TRTPADASMDQSSIAQGPDDDIPAP.

Belongs to the MsrA Met sulfoxide reductase family.

The catalysed reaction is L-methionyl-[protein] + [thioredoxin]-disulfide + H2O = L-methionyl-(S)-S-oxide-[protein] + [thioredoxin]-dithiol. The enzyme catalyses [thioredoxin]-disulfide + L-methionine + H2O = L-methionine (S)-S-oxide + [thioredoxin]-dithiol. Its function is as follows. Has an important function as a repair enzyme for proteins that have been inactivated by oxidation. Catalyzes the reversible oxidation-reduction of methionine sulfoxide in proteins to methionine. The polypeptide is Peptide methionine sulfoxide reductase (Lactuca sativa (Garden lettuce)).